Consider the following 762-residue polypeptide: Protein PHTF1 (762 aa).

One can recognise a PHTF domain in the interval 6–150 (RDAISWYQKK…VHCQIVSTQI (145 aa)). Helical transmembrane passes span 77–97 (GLVRVVFFPLFSSWWIQVTSL), 99–119 (IFVWLLLLYLMQVTAIVLYLM), and 121–141 (PIVSVSEVLGPLCLMLLMGTV). Residues 152-184 (RPSGNNGNRRRRKLRKTVNGDGTRDNGNNSPDK) are disordered. 2 N-linked (GlcNAc...) asparagine glycosylation sites follow: asparagine 179 and asparagine 224. 5 positions are modified to phosphoserine: serine 272, serine 276, serine 277, serine 334, and serine 336. Residues 345–415 (AAFSQGSRSG…NTLHSGTKRD (71 aa)) form a disordered region. Residues 348–364 (SQGSRSGMSGGSRSLNL) are compositionally biased toward low complexity. The N-linked (GlcNAc...) asparagine glycan is linked to asparagine 363. Basic and acidic residues predominate over residues 365-376 (SRRDSESTRHDS). The N-linked (GlcNAc...) asparagine glycan is linked to asparagine 431. The next 4 helical transmembrane spans lie at 473-493 (GVGYQMLGNAVTIGLALFPFL), 515-535 (TLFCGAPPVTPVVILSIINFF), 611-631 (VVVSSVFLLTLSIAFICCAQV), and 645-665 (WEFLIWETALLLFLLRLASLG). Asparagine 674 and asparagine 733 each carry an N-linked (GlcNAc...) asparagine glycan. A helical membrane pass occupies residues 737-757 (VVILSAVSGVISDLLGFNIRL).

In terms of assembly, interacts with FEM1B. In terms of tissue distribution, highly expressed in testis.

The protein resides in the endoplasmic reticulum membrane. The protein localises to the golgi apparatus. Its subcellular location is the cis-Golgi network membrane. This chain is Protein PHTF1, found in Rattus norvegicus (Rat).